Consider the following 280-residue polypeptide: 4-diphosphocytidyl-2-C-methyl-D-erythritol kinase (280 aa).

Lysine 8 is a catalytic residue. Residue 91–101 coordinates ATP; it reads PVAAGLAGGSA. The active site involves aspartate 133.

The protein belongs to the GHMP kinase family. IspE subfamily.

The enzyme catalyses 4-CDP-2-C-methyl-D-erythritol + ATP = 4-CDP-2-C-methyl-D-erythritol 2-phosphate + ADP + H(+). It participates in isoprenoid biosynthesis; isopentenyl diphosphate biosynthesis via DXP pathway; isopentenyl diphosphate from 1-deoxy-D-xylulose 5-phosphate: step 3/6. Its function is as follows. Catalyzes the phosphorylation of the position 2 hydroxy group of 4-diphosphocytidyl-2C-methyl-D-erythritol. The polypeptide is 4-diphosphocytidyl-2-C-methyl-D-erythritol kinase (Clostridium acetobutylicum (strain ATCC 824 / DSM 792 / JCM 1419 / IAM 19013 / LMG 5710 / NBRC 13948 / NRRL B-527 / VKM B-1787 / 2291 / W)).